Here is a 358-residue protein sequence, read N- to C-terminus: Gap junction alpha-5 protein (358 aa).

Topologically, residues 1-19 (MGDWSFLGEFLEEVHKHST) are cytoplasmic. Residues 20-40 (VIGKVWLTVLFIFRMLVLGTA) traverse the membrane as a helical segment. Residues 41–76 (AESSWGDEQADFRCDTIQPGCQNVCYDQAFPISHIR) lie on the Extracellular side of the membrane. A helical membrane pass occupies residues 77–97 (YWVLQIIFVSTPSLVYMGHAM). The Cytoplasmic portion of the chain corresponds to 98-164 (HTVRMQEKQK…CTILIRTTME (67 aa)). The helical transmembrane segment at 165–185 (VAFIVGQYLLYGIFLDTLHVC) threads the bilayer. The Extracellular portion of the chain corresponds to 186–205 (RRSPCPHPVNCYVSRPTEKN). The helical transmembrane segment at 206–226 (VFIVFMMAVAGLSLFLSLAEL) threads the bilayer. The Cytoplasmic portion of the chain corresponds to 227–358 (YHLGWKKIRQ…SKARSDDLSV (132 aa)). 2 disordered regions span residues 242–262 (RQGV…QSLT) and 318–358 (SQKP…DLSV). 2 positions are modified to phosphoserine: S353 and S357.

Belongs to the connexin family. Alpha-type (group II) subfamily. As to quaternary structure, a connexon is composed of a hexamer of connexins. In terms of tissue distribution, abundantly expressed in the lung, also expressed in the kidney and heart.

Its subcellular location is the cell membrane. The protein resides in the cell junction. The protein localises to the gap junction. Functionally, one gap junction consists of a cluster of closely packed pairs of transmembrane channels, the connexons, through which materials of low MW diffuse from one cell to a neighboring cell. This is Gap junction alpha-5 protein (Gja5) from Mus musculus (Mouse).